We begin with the raw amino-acid sequence, 134 residues long: Homeobox protein ceh-5 (134 aa).

The homeobox DNA-binding region spans 35 to 94 (PKRPRTVFTDEQLEKLEESFNTSGYLSGSTRAKLAESLGLSDNQVKVWFQNRRTKQKKID).

It is found in the nucleus. The chain is Homeobox protein ceh-5 (ceh-5) from Caenorhabditis elegans.